Reading from the N-terminus, the 517-residue chain is T-box transcription factor TBX22 (517 aa).

The interval 1–83 (MALSSRAHAF…SDESNSQESL (83 aa)) is disordered. Residues 35–45 (LQEEQFVEEGE) show a composition bias toward acidic residues. Over residues 46–66 (EILRSPSRDSQQPEKRLKAES) the composition is skewed to basic and acidic residues. A compositionally biased stretch (low complexity) spans 74 to 83 (SDESNSQESL). Residues 93-280 (LQGSDLWKRF…RNPFAKGFRD (188 aa)) constitute a DNA-binding region (T-box). The interval 312-333 (TQSGSSGSSPVTSSGGAPSPLN) is disordered. Residues 314 to 333 (SGSSGSSPVTSSGGAPSPLN) are compositionally biased toward low complexity.

The protein localises to the nucleus. Its function is as follows. Probable transcriptional regulator involved in developmental processes. This is major determinant crucial to palatogenesis. The chain is T-box transcription factor TBX22 (Tbx22) from Mus musculus (Mouse).